Here is a 247-residue protein sequence, read N- to C-terminus: Coproheme decarboxylase (247 aa).

Fe-coproporphyrin III contacts are provided by residues Arg-129, 143–147 (YPMDK), His-170, Gln-183, and Ser-221. Residue Tyr-143 is part of the active site.

Belongs to the ChdC family. Type 1 subfamily. Fe-coproporphyrin III serves as cofactor.

The catalysed reaction is Fe-coproporphyrin III + 2 H2O2 + 2 H(+) = heme b + 2 CO2 + 4 H2O. It carries out the reaction Fe-coproporphyrin III + H2O2 + H(+) = harderoheme III + CO2 + 2 H2O. It catalyses the reaction harderoheme III + H2O2 + H(+) = heme b + CO2 + 2 H2O. It participates in porphyrin-containing compound metabolism; protoheme biosynthesis. In terms of biological role, involved in coproporphyrin-dependent heme b biosynthesis. Catalyzes the decarboxylation of Fe-coproporphyrin III (coproheme) to heme b (protoheme IX), the last step of the pathway. The reaction occurs in a stepwise manner with a three-propionate intermediate. The chain is Coproheme decarboxylase from Bacillus mycoides (strain KBAB4) (Bacillus weihenstephanensis).